The primary structure comprises 235 residues: uncharacterized protein (235 aa).

The N-acetyltransferase domain maps to Leu82–Pro221.

The protein belongs to the acetyltransferase family.

The protein localises to the golgi apparatus membrane. It is found in the endoplasmic reticulum membrane. This is an uncharacterized protein from Schizosaccharomyces pombe (strain 972 / ATCC 24843) (Fission yeast).